Here is an 80-residue protein sequence, read N- to C-terminus: Putative membrane protein insertion efficiency factor (80 aa).

Residues 61-80 (KTGKDPVPDHFSLKRNQEGE) form a disordered region. A compositionally biased stretch (basic and acidic residues) spans 62-80 (TGKDPVPDHFSLKRNQEGE).

This sequence belongs to the UPF0161 family.

The protein localises to the cell membrane. Could be involved in insertion of integral membrane proteins into the membrane. In Streptococcus pneumoniae serotype 19F (strain G54), this protein is Putative membrane protein insertion efficiency factor.